Consider the following 120-residue polypeptide: Ribosome-binding factor A (120 aa).

The protein belongs to the RbfA family. Monomer. Binds 30S ribosomal subunits, but not 50S ribosomal subunits or 70S ribosomes.

The protein localises to the cytoplasm. Functionally, one of several proteins that assist in the late maturation steps of the functional core of the 30S ribosomal subunit. Associates with free 30S ribosomal subunits (but not with 30S subunits that are part of 70S ribosomes or polysomes). Required for efficient processing of 16S rRNA. May interact with the 5'-terminal helix region of 16S rRNA. This is Ribosome-binding factor A from Fusobacterium nucleatum subsp. nucleatum (strain ATCC 25586 / DSM 15643 / BCRC 10681 / CIP 101130 / JCM 8532 / KCTC 2640 / LMG 13131 / VPI 4355).